The following is a 184-amino-acid chain: Cobalamin adenosyltransferase (184 aa).

Positions 1-21 (MGNRLSKIATRTGDAGTTGLG) are disordered. Residues 10 to 13 (TRTG), 18 to 19 (TG), Lys28, 130 to 134 (RRAER), and Asn154 contribute to the ATP site.

The protein belongs to the Cob(I)alamin adenosyltransferase family. In terms of assembly, homotrimer.

It catalyses the reaction 2 cob(II)alamin + AH2 + 2 ATP = 2 adenosylcob(III)alamin + 2 triphosphate + A + 2 H(+). Is potentially allosterically regulated by GTP/GDP, which enhances its affinity for AdoCbl by 5-fold. Binds cob(II)alamin weakly in the absence of ATP. The presence of ATP (but not GTP or GDP) increases the affinity of cob(II)alamin for the enzyme, and stoichiometric binding is observed. GTP blocks the transfer of cob(II)alamin to IcmF from ATR, thus averting its reconstitution with inactive cofactor. Functionally, adenosyltransferase that catalyzes the conversion of cob(II)alamin to adenosylcob(III)alamin (AdoCbl) in the presence of ATP and an electron donor. Acts as an accessory protein of IcmF that functions in cofactor repair, since IcmF is prone to inactivation during catalytic turnover due to the occasional loss of the 5'-deoxyadenosine moiety and formation of the inactive cob(II)alamin cofactor in its active site. Thus, receives and repairs the inactive cofactor, which is then reloaded onto IcmF in a GTPase-gated step. This chain is Cobalamin adenosyltransferase, found in Cupriavidus metallidurans (strain ATCC 43123 / DSM 2839 / NBRC 102507 / CH34) (Ralstonia metallidurans).